The sequence spans 337 residues: MIYKIINFILSKKDHEEKKDLLLKIMKFFNKTPLNFLIKNKFPNNNISCMGLNFKNILGLAAGLDKNGDYIKLFSDIGFGFIELGTVTLKPQHGEKKPRLFCFPNVYGIINRMGFNNNGIENLIENIKNEKNVKSILGINIGKNKDTLIEKAKDDYLICINKAYYYSDYISINISSPNTKDLRKLQFGELFSDLLKSIKEEQNKLNKIYNKYVPILIKISPDINNSEIIQISDCLLSYNIDGVIATNTTVNKDIIMRCCNNCEKGGLSGAPLNENSTRIIKKLSKELKGKIPIIGSGGIISVKSAKEKIKAGASLIQIYSGLVFFGLKIIKKLIKSF.

Residues 62–66 (AGLDK) and Thr-86 each bind FMN. Lys-66 is a binding site for substrate. 111–115 (NRMGF) is a substrate binding site. The FMN site is built by Asn-140 and Asn-173. Asn-173 provides a ligand contact to substrate. Residue Ser-176 is the Nucleophile of the active site. Position 178 (Asn-178) interacts with substrate. The FMN site is built by Lys-218 and Thr-246. 247–248 (NT) serves as a coordination point for substrate. FMN-binding positions include Gly-269, Gly-298, and 319-320 (YS).

Belongs to the dihydroorotate dehydrogenase family. Type 2 subfamily. In terms of assembly, monomer. FMN serves as cofactor.

Its subcellular location is the cell membrane. The enzyme catalyses (S)-dihydroorotate + a quinone = orotate + a quinol. The protein operates within pyrimidine metabolism; UMP biosynthesis via de novo pathway; orotate from (S)-dihydroorotate (quinone route): step 1/1. Its function is as follows. Catalyzes the conversion of dihydroorotate to orotate with quinone as electron acceptor. The chain is Dihydroorotate dehydrogenase (quinone) from Wigglesworthia glossinidia brevipalpis.